A 420-amino-acid polypeptide reads, in one-letter code: Glucose-1-phosphate adenylyltransferase (420 aa).

Residues Tyr107, Gly173, Glu188–Lys189, and Ser206 contribute to the alpha-D-glucose 1-phosphate site.

Belongs to the bacterial/plant glucose-1-phosphate adenylyltransferase family. In terms of assembly, homotetramer.

The catalysed reaction is alpha-D-glucose 1-phosphate + ATP + H(+) = ADP-alpha-D-glucose + diphosphate. Its pathway is glycan biosynthesis; glycogen biosynthesis. Functionally, involved in the biosynthesis of ADP-glucose, a building block required for the elongation reactions to produce glycogen. Catalyzes the reaction between ATP and alpha-D-glucose 1-phosphate (G1P) to produce pyrophosphate and ADP-Glc. The sequence is that of Glucose-1-phosphate adenylyltransferase from Shewanella sp. (strain MR-4).